The following is a 540-amino-acid chain: SNW/SKI-interacting protein B (540 aa).

Disordered stretches follow at residues 1-106 (MVLR…SLTV), 215-273 (GETQ…NPKG), 351-402 (GAAP…RDRD), and 502-526 (ASVAAGKRERPVEFDGPEMEEDPFH). Basic and acidic residues-rich tracts occupy residues 16–29 (PHDHTEDEWFKERY) and 83–94 (MGRRGGDGDGEQ). The tract at residues 189-353 (PEFIKYTPAR…KARAEMLGAA (165 aa)) is SNW. Residues 236-251 (AGSPPVPVLRSPPRPP) are compositionally biased toward pro residues. Positions 359 to 382 (ERSKAAAERDAIREERRRERRLEA) are enriched in basic and acidic residues. The span at 383–393 (RAAAAAASKKS) shows a compositional bias: low complexity.

It belongs to the SNW family.

Its subcellular location is the nucleus. In Oryza sativa subsp. japonica (Rice), this protein is SNW/SKI-interacting protein B.